A 118-amino-acid polypeptide reads, in one-letter code: Small ribosomal subunit protein uS13 (118 aa).

Residues 94 to 118 (SLPLRGQRTKTNARTRKGPRKPIKK) are disordered.

It belongs to the universal ribosomal protein uS13 family. Part of the 30S ribosomal subunit. Forms a loose heterodimer with protein S19. Forms two bridges to the 50S subunit in the 70S ribosome.

Its function is as follows. Located at the top of the head of the 30S subunit, it contacts several helices of the 16S rRNA. In the 70S ribosome it contacts the 23S rRNA (bridge B1a) and protein L5 of the 50S subunit (bridge B1b), connecting the 2 subunits; these bridges are implicated in subunit movement. Contacts the tRNAs in the A and P-sites. The protein is Small ribosomal subunit protein uS13 of Vibrio vulnificus (strain CMCP6).